A 768-amino-acid chain; its full sequence is Levansucrase (768 aa).

An N-terminal signal peptide occupies residues Met1 to Ala36. Polar residues-rich tracts occupy residues Ser57–Leu68, Thr80–Asn99, Ser106–Asp134, and Asn143–Ser153. The tract at residues Ser57–Leu158 is disordered. Sucrose contacts are provided by Trp250, Asp251, and Ser320. Catalysis depends on Asp251, which acts as the Nucleophile. Position 398 (Asp398) interacts with Ca(2+). Sucrose contacts are provided by Arg403 and Asp404. Residues Gln429, Asn468, and Asp502 each contribute to the Ca(2+) site. Residue Glu503 participates in sucrose binding. Glu505 serves as the catalytic Proton donor/acceptor. Arg523 is a binding site for sucrose. The tract at residues His688 to Gly736 is disordered. Positions Val691–Thr727 are enriched in low complexity. Residues Leu732–Gly736 carry the LPXTG sorting signal motif. Ala735 carries the pentaglycyl murein peptidoglycan amidated alanine modification. The propeptide at Gly736–Asn768 is removed by sortase.

Belongs to the glycosyl hydrolase 68 family.

It is found in the secreted. The protein resides in the cell wall. It localises to the cell surface. It carries out the reaction [6)-beta-D-fructofuranosyl-(2-&gt;](n) alpha-D-glucopyranoside + sucrose = [6)-beta-D-fructofuranosyl-(2-&gt;](n+1) alpha-D-glucopyranoside + D-glucose. Its activity is regulated as follows. Calcium ions are required for optimal activity, but do not seem to be essential since addition of EDTA causes only a 48% drop in activity. Ca(2+) may play an important structural role and promote stability of levansucrase. Its function is as follows. Fructosyltransferase that catalyzes the polymerization of the fructose moiety of sucrose to produce levan polymer and the fructo-oligosaccharide (FOS) 1-kestose. Is also able to convert raffinose into a fructan polymer and a single oligosaccharide (most likely Gal-Glc-Frc-Frc) in vitro; however, L.gasseri strain DSM 20077 is unable to ferment raffinose. Also displays sucrose hydrolase activity. The protein is Levansucrase of Lactobacillus gasseri.